The primary structure comprises 72 residues: DNA-directed RNA polymerase subunit omega (72 aa).

Belongs to the RNA polymerase subunit omega family. As to quaternary structure, the RNAP catalytic core consists of 2 alpha, 1 beta, 1 beta' and 1 omega subunit. When a sigma factor is associated with the core the holoenzyme is formed, which can initiate transcription.

The catalysed reaction is RNA(n) + a ribonucleoside 5'-triphosphate = RNA(n+1) + diphosphate. Functionally, promotes RNA polymerase assembly. Latches the N- and C-terminal regions of the beta' subunit thereby facilitating its interaction with the beta and alpha subunits. The protein is DNA-directed RNA polymerase subunit omega of Petrotoga mobilis (strain DSM 10674 / SJ95).